Consider the following 372-residue polypeptide: Alanine dehydrogenase 2 (372 aa).

His-95 is a catalytic residue. NAD(+) is bound at residue 169–199 (KVTIIGGGQAGTNAAKIALGLGADVTILDVN).

The protein belongs to the AlaDH/PNT family.

It carries out the reaction L-alanine + NAD(+) + H2O = pyruvate + NH4(+) + NADH + H(+). It participates in amino-acid degradation; L-alanine degradation via dehydrogenase pathway; NH(3) and pyruvate from L-alanine: step 1/1. May play a role in cell wall synthesis as L-alanine is an important constituent of the peptidoglycan layer. This Staphylococcus aureus (strain N315) protein is Alanine dehydrogenase 2 (ald2).